Here is a 416-residue protein sequence, read N- to C-terminus: Calreticulin (416 aa).

N-linked (GlcNAc...) asparagine glycosylation occurs at asparagine 54. Cysteine 108 and cysteine 140 are disulfide-bonded. Residues tyrosine 112, lysine 114, tyrosine 131, and aspartate 138 each contribute to the an alpha-D-glucoside site. A run of 7 repeats spans residues 194-205, 213-224, 230-241, 248-259, 263-273, 277-287, and 291-301. Positions 194–259 are 4 X approximate repeats; the sequence is KQSGSVYTDW…EAKKPEDWDD (66 aa). Positions 209–281 are disordered; it reads KQIKDPEAKK…NPDYKGEWKP (73 aa). Positions 210 to 255 are enriched in basic and acidic residues; that stretch reads QIKDPEAKKPEDWEDKEYIPDPEDKKPEGYDDIPKEITDPEAKKPE. The tract at residues 263–301 is 3 X approximate repeats; it reads GEWTAPTIPNPDYKGEWKPKKIKNPNFKGKWKAPMIDNP. Position 321 (glutamate 321) interacts with an alpha-D-glucoside. Residues 349 to 378 are compositionally biased toward basic and acidic residues; it reads ETWGKNKDAEKAAFDEAEKKKEEEEAKDDP. The tract at residues 349–416 is disordered; sequence ETWGKNKDAE…EDDEDVHDEL (68 aa). A compositionally biased stretch (acidic residues) spans 379–416; it reads TESDDEKPDEEGESDGEGDDESKDIDNEEDDEDVHDEL. The short motif at 413 to 416 is the Prevents secretion from ER element; it reads HDEL.

This sequence belongs to the calreticulin family.

The protein resides in the endoplasmic reticulum lumen. Its function is as follows. Molecular calcium-binding chaperone promoting folding, oligomeric assembly and quality control in the ER via the calreticulin/calnexin cycle. This lectin may interact transiently with almost all of the monoglucosylated glycoproteins that are synthesized in the ER. The sequence is that of Calreticulin from Berberis stolonifera (Barberry).